Reading from the N-terminus, the 531-residue chain is O-phosphoserine--tRNA(Cys) ligase (531 aa).

Substrate-binding positions include 189–191 (HMT), 234–236 (SAS), 276–277 (YY), and Asn-319.

It belongs to the class-II aminoacyl-tRNA synthetase family. O-phosphoseryl-tRNA(Cys) synthetase subfamily. Homotetramer. Interacts with SepCysS.

It catalyses the reaction tRNA(Cys) + O-phospho-L-serine + ATP = O-phospho-L-seryl-tRNA(Cys) + AMP + diphosphate. Functionally, catalyzes the attachment of O-phosphoserine (Sep) to tRNA(Cys). The sequence is that of O-phosphoserine--tRNA(Cys) ligase from Methanoculleus marisnigri (strain ATCC 35101 / DSM 1498 / JR1).